A 443-amino-acid polypeptide reads, in one-letter code: Dynein regulatory complex protein 9 (443 aa).

Disordered stretches follow at residues 1-40 and 415-443; these read MEED…LPKE and GFKM…GKKK. Residues 393-422 enclose the IQ domain; sequence ELKSVIKLQAWWRGTMIRREIGGFKMPKDK. Residues 415–430 show a composition bias toward basic and acidic residues; sequence GFKMPKDKVDSKDSKG. Residues 431-443 are compositionally biased toward basic residues; it reads KGKGKDKRRGKKK.

It belongs to the DRC9 family. Component of the nexin-dynein regulatory complex (N-DRC). Interacts (via IQ domain) with CALM when calcium levels are low. Does not interact with CALM in the presence of Ca(2+). Interacts with the HSP70 proteins HSPA1L and HSPA8. May form a complex with CAMK4 and HSP70.

The protein localises to the cytoplasm. Its subcellular location is the cell projection. The protein resides in the cilium. It is found in the flagellum. It localises to the cytoskeleton. The protein localises to the flagellum axoneme. In terms of biological role, component of the nexin-dynein regulatory complex (N-DRC), a key regulator of ciliary/flagellar motility which maintains the alignment and integrity of the distal axoneme and regulates microtubule sliding in motile axonemes. Binds calmodulin when cellular Ca(2+) levels are low and thereby contributes to the regulation of calcium and calmodulin-dependent protein kinase IV (CAMK4) activity; contributes to the regulation of CAMK4 signaling cascades. Required for normal axoneme assembly in sperm flagella, normal sperm tail formation and for male fertility. This is Dynein regulatory complex protein 9 (IQCG) from Macaca fascicularis (Crab-eating macaque).